Reading from the N-terminus, the 196-residue chain is Beta-crystallin A2 (196 aa).

The interval 1 to 11 (MTSEAMDTLGQ) is N-terminal arm. 2 Beta/gamma crystallin 'Greek key' domains span residues 12 to 51 (YKIT…KVES) and 52 to 98 (GPWV…RPVK). The segment at 99-104 (CANHND) is connecting peptide. Beta/gamma crystallin 'Greek key' domains are found at residues 105–146 (SKAI…KVNA) and 147–195 (GAWV…RRIQ).

The protein belongs to the beta/gamma-crystallin family. As to quaternary structure, homo/heterodimer, or complexes of higher-order. The structure of beta-crystallin oligomers seems to be stabilized through interactions between the N-terminal arms.

Crystallins are the dominant structural components of the vertebrate eye lens. The polypeptide is Beta-crystallin A2 (CRYBA2) (Gallus gallus (Chicken)).